A 422-amino-acid polypeptide reads, in one-letter code: Lactoyl-CoA dehydratase subunit alpha (422 aa).

Belongs to the FldB/FldC dehydratase alpha/beta subunit family. In terms of assembly, heterodimer of an alpha (LcdA) and a beta (LcdB) subunit. It depends on [4Fe-4S] cluster as a cofactor. Requires FMN as cofactor. The cofactor is riboflavin. Mg(2+) is required as a cofactor.

It catalyses the reaction (R)-lactoyl-CoA = acryloyl-CoA + H2O. It carries out the reaction (2R)-hydroxybutanoyl-CoA = (2E)-butenoyl-CoA + H2O. Its activity is regulated as follows. Activated by the LcdC protein. Its function is as follows. Involved in the acrylate pathway for the conversion of D-lactic acid to propionic acid. Catalyzes the reversible dehydration of Lactoyl-CoA and 2-hydroxybutyroyl-CoA to acryloyl-CoA and crotonyl-CoA, respectively. This chain is Lactoyl-CoA dehydratase subunit alpha (lcdA), found in Anaerotignum propionicum (Clostridium propionicum).